Reading from the N-terminus, the 219-residue chain is Albonoursin synthase (219 aa).

It belongs to the nitroreductase family. As to quaternary structure, homomer. Requires FMN as cofactor. The N-terminus is blocked.

The protein resides in the cytoplasm. It carries out the reaction cyclo(L-phenylalanyl-L-leucyl) + 2 O2 = albonoursin + 2 H2O2. Functionally, involved in the biosynthesis of albonoursin (cyclo[(alpha,beta-dehydro-Phe)-(alpha,beta-dehydro-Leu)]), an antibacterial peptide. Catalyzes the formation of alpha,beta-dehydro-Phe (DPhe) and alpha,beta-dehydro-Leu (DLeu) residues during the biosynthesis of albonoursin. The catalytic reaction of cyclo(L-Phe-L-Leu) occurs in a two-step sequential alpha-beta-dehydrogenation leading first to cyclo(alpha,beta-dehydro-Phe-L-Leu) and finally to albonoursin. Can also use cyclo(L-Phe-L-His), cyclo(L-Trp-L-Trp), cyclo(L-Leu-L-Ala), cyclo(L-Phe-Gly), cyclo(L-Leu-Gly), cyclo(L-Ser-Gly) and cyclo(L-Glu-Gly) as substrate suggesting that the diketopiperazine ring is essential for the enzymatic reaction. The protein is Albonoursin synthase (albA) of Streptomyces noursei (Streptomyces albulus).